A 347-amino-acid polypeptide reads, in one-letter code: Photosystem II assembly protein Ycf48 (347 aa).

Residues 1 to 38 (MFAKQIDIHWQKMKGIKFLHWLLGTVLLWVSLSTPALA) form the signal peptide. The Arg-rich patch motif lies at 202–226 (RGSFYSTWEPGQTAWEPHNRTTSRR).

Belongs to the Ycf48 family. As to quaternary structure, interacts with the D1 protein (crystallized with PsbA1 or PsbA3), via the latter's C-terminal prepropeptide, may interact with parts of the mature D1 protein as well.

The protein localises to the cellular thylakoid lumen. In terms of biological role, a factor required for optimal assembly of photosystem II (PSII), acting in the early stages of PSII assembly. Also plays a role in replacement of photodamaged D1 (psbA). Assists YidC in synthesis of chlorophyll-binding proteins. The sequence is that of Photosystem II assembly protein Ycf48 from Thermosynechococcus vestitus (strain NIES-2133 / IAM M-273 / BP-1).